The sequence spans 89 residues: Small ribosomal subunit protein bS20 (89 aa).

This sequence belongs to the bacterial ribosomal protein bS20 family.

Binds directly to 16S ribosomal RNA. This chain is Small ribosomal subunit protein bS20, found in Helicobacter pylori (strain ATCC 700392 / 26695) (Campylobacter pylori).